An 834-amino-acid chain; its full sequence is Translation initiation factor IF-2 (834 aa).

Residues 1-247 (MTEEKKFSGS…STPATVRKEQ (247 aa)) are disordered. The segment covering 45–101 (GGSRPSRPARPNNNNQNRPNNGGQSQNRNNQNRSNTSTGGQNRSNNGGNRNNRPGSR) has biased composition (low complexity). The segment covering 109–125 (PMIREKKNWSTKPREGQ) has biased composition (basic and acidic residues). Composition is skewed to low complexity over residues 149 to 165 (ASAAAKHPKKPAAATKP) and 173 to 201 (ATKPATASTTTGAGKFGGALASGNNSARN). A compositionally biased stretch (basic residues) spans 224 to 233 (GSKKSRRIAA). One can recognise a tr-type G domain in the interval 335–504 (SRPPVVTIMG…LLQAEVLELK (170 aa)). Residues 344-351 (GHVDHGKT) are G1. 344 to 351 (GHVDHGKT) is a binding site for GTP. The G2 stretch occupies residues 369 to 373 (GITQH). Residues 390 to 393 (DTPG) form a G3 region. GTP contacts are provided by residues 390–394 (DTPGH) and 444–447 (NKID). The G4 stretch occupies residues 444-447 (NKID). Residues 480–482 (SAK) form a G5 region.

It belongs to the TRAFAC class translation factor GTPase superfamily. Classic translation factor GTPase family. IF-2 subfamily.

The protein resides in the cytoplasm. In terms of biological role, one of the essential components for the initiation of protein synthesis. Protects formylmethionyl-tRNA from spontaneous hydrolysis and promotes its binding to the 30S ribosomal subunits. Also involved in the hydrolysis of GTP during the formation of the 70S ribosomal complex. In Leuconostoc mesenteroides subsp. mesenteroides (strain ATCC 8293 / DSM 20343 / BCRC 11652 / CCM 1803 / JCM 6124 / NCDO 523 / NBRC 100496 / NCIMB 8023 / NCTC 12954 / NRRL B-1118 / 37Y), this protein is Translation initiation factor IF-2.